The primary structure comprises 200 residues: Probable GTP-binding protein EngB (200 aa).

Residues 26-200 (SIPEVALAGR…IYEIAQCIKK (175 aa)) form the EngB-type G domain. Residues 34–41 (GRSNVGKS), 61–65 (GCTRQ), 80–83 (DLPG), 147–150 (TKID), and 179–181 (VSS) contribute to the GTP site. Positions 41 and 63 each coordinate Mg(2+).

The protein belongs to the TRAFAC class TrmE-Era-EngA-EngB-Septin-like GTPase superfamily. EngB GTPase family. Mg(2+) serves as cofactor.

Functionally, necessary for normal cell division and for the maintenance of normal septation. The protein is Probable GTP-binding protein EngB of Ehrlichia ruminantium (strain Gardel).